The chain runs to 346 residues: Selenide, water dikinase (346 aa).

U16 is an active-site residue. U16 is a non-standard amino acid (selenocysteine). Residues K19 and 47–49 each bind ATP; that span reads TAD. Mg(2+) is bound at residue D50. ATP-binding positions include D67, D90, and 138 to 140; that span reads GHS. D90 serves as a coordination point for Mg(2+). D226 is a Mg(2+) binding site.

This sequence belongs to the selenophosphate synthase 1 family. Class I subfamily. In terms of assembly, homodimer. It depends on Mg(2+) as a cofactor.

It carries out the reaction hydrogenselenide + ATP + H2O = selenophosphate + AMP + phosphate + 2 H(+). Functionally, synthesizes selenophosphate from selenide and ATP. This Haemophilus influenzae (strain ATCC 51907 / DSM 11121 / KW20 / Rd) protein is Selenide, water dikinase.